The primary structure comprises 183 residues: Large ribosomal subunit protein bL17 (183 aa).

Residues 130–150 (GTKFAKDEKAKAEATEAKAEE) are compositionally biased toward basic and acidic residues. Residues 130–183 (GTKFAKDEKAKAEATEAKAEETTETTESTEAESTEAPAEEAKAEDTAAEKKDES) form a disordered region. Residues 151–162 (TTETTESTEAES) are compositionally biased toward acidic residues. Positions 168 to 183 (EEAKAEDTAAEKKDES) are enriched in basic and acidic residues.

The protein belongs to the bacterial ribosomal protein bL17 family. As to quaternary structure, part of the 50S ribosomal subunit. Contacts protein L32.

This is Large ribosomal subunit protein bL17 from Saccharopolyspora erythraea (strain ATCC 11635 / DSM 40517 / JCM 4748 / NBRC 13426 / NCIMB 8594 / NRRL 2338).